The chain runs to 76 residues: MKLTCMMIVAVLFLTAWTFVTAITSNGLENLFPKAHHEMKNPEASKLNKRCVPYEGPCNWLTQNCCDATCVVFWCL.

A signal peptide spans M1–A22. The propeptide occupies I23 to N48. Cystine bridges form between C51–C66, C58–C70, and C65–C75.

This sequence belongs to the conotoxin O1 superfamily. Expressed by the venom duct.

It localises to the secreted. Functionally, omega-conotoxins act at presynaptic membranes, they bind and block voltage-gated calcium channels (Cav). The polypeptide is Omega-conotoxin-like TxO5 (Conus textile (Cloth-of-gold cone)).